The following is a 177-amino-acid chain: ATP-dependent protease subunit HslV (177 aa).

Thr-2 is an active-site residue. 3 residues coordinate Na(+): Gly-158, Cys-161, and Thr-164.

This sequence belongs to the peptidase T1B family. HslV subfamily. In terms of assembly, a double ring-shaped homohexamer of HslV is capped on each side by a ring-shaped HslU homohexamer. The assembly of the HslU/HslV complex is dependent on binding of ATP.

Its subcellular location is the cytoplasm. The catalysed reaction is ATP-dependent cleavage of peptide bonds with broad specificity.. With respect to regulation, allosterically activated by HslU binding. Its function is as follows. Protease subunit of a proteasome-like degradation complex believed to be a general protein degrading machinery. In Pseudomonas aeruginosa (strain LESB58), this protein is ATP-dependent protease subunit HslV.